The following is a 291-amino-acid chain: Methyl-CpG-binding domain protein 3 (291 aa).

Residues 1–72 enclose the MBD domain; the sequence is MERKRWECPA…DFRTGKMLMS (72 aa). Residues 1–80 are required for interaction with MBD2; it reads MERKRWECPA…MSKMNKSRQR (80 aa). Ser-56 bears the Phosphoserine mark. The required for interaction with MBD3L2 stretch occupies residues 60 to 80; it reads STFDFRTGKMLMSKMNKSRQR. A Glycyl lysine isopeptide (Lys-Gly) (interchain with G-Cter in SUMO2) cross-link involves residue Lys-73. Residue Ser-85 is modified to Phosphoserine. Residues Lys-90 and Lys-92 each participate in a glycyl lysine isopeptide (Lys-Gly) (interchain with G-Cter in SUMO2) cross-link. Ser-144 carries the phosphoserine modification. A coiled-coil region spans residues 216–245; the sequence is KAFMVTDEDIRKQEELVQQVRKRLEEALMA. Basic and acidic residues predominate over residues 254–267; the sequence is LARDGEAPLDKACA. Residues 254-291 form a disordered region; it reads LARDGEAPLDKACAEDDDEEDEEEEEEEPDPDPEMEHV. A compositionally biased stretch (acidic residues) spans 268-291; sequence EDDDEEDEEEEEEEPDPDPEMEHV.

Heterodimer (via N-terminus) with MBD2. Component of the MeCP1 histone deacetylase complex. Component of the nucleosome remodeling and deacetylase (NuRD) repressor complex, composed of core proteins MTA1, MTA2, MTA3, RBBP4, RBBP7, HDAC1, HDAC2, MBD2, MBD3, and peripherally associated proteins CDK2AP1, CDK2AP2, GATAD2A, GATAD2B, CHD3, CHD4 and CHD5. The exact stoichiometry of the NuRD complex is unknown, and some subunits such as MBD2 and MBD3, GATAD2A and GATAD2B, and CHD3, CHD4 and CHD5 define mutually exclusive NuRD complexes. Interacts with MBD3L2 (via N-terminus); the interaction is direct. Interacts with BCL6. Interacts with CDK2AP1. Interacts with HDAC1. Interacts with MTA2. Interacts with DNMT1. Interacts with GATAD2A. Interacts with GATAD2B. Does not interact with PWWP2A. Does not interact with PWWP2B.

Its subcellular location is the nucleus. The protein localises to the chromosome. Functionally, acts as a component of the histone deacetylase NuRD complex which participates in the remodeling of chromatin. Acts as transcriptional repressor and plays a role in gene silencing. Does not bind to methylated DNA by itself. Binds to a lesser degree DNA containing unmethylated CpG dinucleotides. Recruits histone deacetylases and DNA methyltransferases. This Homo sapiens (Human) protein is Methyl-CpG-binding domain protein 3 (MBD3).